A 262-amino-acid polypeptide reads, in one-letter code: NAD-dependent glucose-6-phosphate dehydrogenase (262 aa).

Positions 90, 115, 152, and 156 each coordinate NAD(+). The active-site Proton acceptor is tyrosine 152.

Belongs to the NAD(P)-dependent epimerase/dehydratase family. In terms of assembly, homodimer.

It catalyses the reaction D-glucose 6-phosphate + NAD(+) = 6-phospho-D-glucono-1,5-lactone + NADH + H(+). It participates in carbohydrate degradation; pentose phosphate pathway. Functionally, catalyzes the NAD-dependent oxidation of glucose 6-phosphate to 6-phosphogluconolactone. This is NAD-dependent glucose-6-phosphate dehydrogenase from Haloferax volcanii (strain ATCC 29605 / DSM 3757 / JCM 8879 / NBRC 14742 / NCIMB 2012 / VKM B-1768 / DS2) (Halobacterium volcanii).